Here is a 700-residue protein sequence, read N- to C-terminus: Pentatricopeptide repeat-containing protein At3g26540 (700 aa).

17 PPR repeats span residues 95-125, 126-160, 161-195, 196-226, 227-261, 262-296, 297-327, 328-362, 363-389, 394-428, 429-459, 461-495, 497-529, 530-560, 561-595, 596-626, and 632-662; these read PIFLLNRAIEAYGKCGCVDDARELFEEMPER, DGGSWNAVITACAQNGVSDEVFRMFRRMNRDGVRA, TETSFAGVLKSCGLILDLRLLRQLHCAVVKYGYSG, NVDLETSIVDVYGKCRVMSDARRVFDEIVNP, SDVSWNVIVRRYLEMGFNDEAVVMFFKMLELNVRP, LNHTVSSVMLACSRSLALEVGKVIHAIAVKLSVVA, DTVVSTSVFDMYVKCDRLESARRVFDQTRSK, DLKSWTSAMSGYAMSGLTREARELFDLMPERNIVS, WNAMLGGYVHAHEWDEALDFLTLMRQE, DNVTLVWILNVCSGISDVQMGKQAHGFIYRHGYDT, NVIVANALLDMYGKCGTLQSANIWFRQMSEL, DEVSWNALLTGVARVGRSEQALSFFEGMQVEAKPS, YTLATLLAGCANIPALNLGKAIHGFLIRDGYKI, DVVIRGAMVDMYSKCRCFDYAIEVFKEAATR, DLILWNSIIRGCCRNGRSKEVFELFMLLENEGVKP, DHVTFLGILQACIREGHVELGFQYFSSMSTK, and QVEHYDCMIELYCKYGCLHQLEEFLLLMPFD.

This sequence belongs to the PPR family. PCMP-A subfamily.

This Arabidopsis thaliana (Mouse-ear cress) protein is Pentatricopeptide repeat-containing protein At3g26540 (PCMP-A5).